The following is an 84-amino-acid chain: uncharacterized protein (84 aa).

2 consecutive transmembrane segments (helical) span residues His-7 to Ile-27 and Ile-52 to Cys-72.

It is found in the membrane. This is an uncharacterized protein from Saccharomyces cerevisiae (strain ATCC 204508 / S288c) (Baker's yeast).